We begin with the raw amino-acid sequence, 249 residues long: Aquaporin TIP4-3 (249 aa).

2 helical membrane passes run 20–40 (GVLG…GAAM) and 56–76 (TAVA…GFHI). Positions 82–84 (NPA) match the NPA 1 motif. The next 3 membrane-spanning stretches (helical) occupy residues 100–122 (SSLY…RWLT), 141–161 (GVVA…ATIL), and 169–189 (GAGP…GAAL). The short motif at 195–197 (NPA) is the NPA 2 element. The helical transmembrane segment at 214-234 (VYWVGPLAGGPLAVLVYECCF) threads the bilayer.

Belongs to the MIP/aquaporin (TC 1.A.8) family. TIP (TC 1.A.8.10) subfamily.

The protein resides in the vacuole membrane. Functionally, aquaporins facilitate the transport of water and small neutral solutes across cell membranes. This Zea mays (Maize) protein is Aquaporin TIP4-3 (TIP4-3).